Here is a 164-residue protein sequence, read N- to C-terminus: uncharacterized protein (164 aa).

Residues 1-77 (MGQKKTMGTE…PCSIRDAPFH (77 aa)) form a disordered region.

This is an uncharacterized protein from Homo sapiens (Human).